Here is a 377-residue protein sequence, read N- to C-terminus: Guanine nucleotide-binding protein subunit beta (377 aa).

WD repeat units follow at residues 63-93, 105-135, 154-185, 202-233, 246-276, 292-323, and 339-369; these read GHTG…IVWN, LPCA…SIFS, GHRG…ILWD, GHTA…RLWD, GHEG…RLYD, GENG…YVWD, and SHRN…KIWA. Short sequence motifs (DWD box) lie at residues 220 to 235 and 263 to 278; these read FISG…WDTR and FGTG…YDIR.

It belongs to the WD repeat G protein beta family. In terms of assembly, g proteins are composed of 3 units, alpha, beta and gamma. Interacts with the gamma subunits GG1 and GG2. The dimers GB1-GG1 and GB1-GG2 interact with NDL1, NDL2 and NDL3. Interacts with WNK8. Interacts with XLG2. Interacts with RACK1A, RACK1B and RACK1C. Interacts with ZAR1 (via GBeta-binding domain). Expressed in seedlings (especially at the hypocotyl/root junction), roots, leaves (restricted to veins and guard cells), and flowers. Also present in hydathods. Expressed in guard cells, mesophyll tissue of cotyledons, trichomes and whole siliques, but not in seeds.

It localises to the cell membrane. It is found in the cytoplasm. Its subcellular location is the nucleus. Functionally, guanine nucleotide-binding proteins (G proteins) are involved as a modulator or transducer in various transmembrane signaling systems. The beta and gamma chains are required for the GTPase activity, for replacement of GDP by GTP, and for G protein-effector interaction. The heterotrimeric G-protein controls defense responses to necrotrophic and vascular fungi probably by modulating cell wall-related genes expression (e.g. lower xylose content in cell walls); involved in resistance to fungal pathogens such as Alternaria brassicicola and Fusarium oxysporum. Modulates root architecture (e.g. lateral root formation). Acts with XGL3 in the positive regulation of root waving and root skewing. Involved in the asymmetric division of zygote and specification of apical and basal cell lineages. This Arabidopsis thaliana (Mouse-ear cress) protein is Guanine nucleotide-binding protein subunit beta (GB1).